A 268-amino-acid polypeptide reads, in one-letter code: MTAQQPPRLLRGIPLAVRNLQKTFGSRQVLRGIDLHIPAGQFVAVVGRSGCGKSTLLRLLAGLDQPTGGDLLAGSAPLTDARDDTRLMFQEARLLPWKKIIDNVGLGLKGNWRAQALQALDAVGLADRANEWPAALSGGQKQRVALARALIHQPRLLLLDEPLGALDALTRIEMQQLIERLWQQHGFTVLLVTHDVSEAVAIADRVILIEDGEVGLDLPVELPRPRVRGSHRLAALETEVLNRVLSLPGEPPAPEPVSPLPTQLRWAQ.

The 222-residue stretch at 15 to 236 (LAVRNLQKTF…VRGSHRLAAL (222 aa)) folds into the ABC transporter domain. Residue 47–54 (GRSGCGKS) coordinates ATP.

Belongs to the ABC transporter superfamily. Aliphatic sulfonates importer (TC 3.A.1.17.2) family. The complex is composed of two ATP-binding proteins (SsuB), two transmembrane proteins (SsuC) and a solute-binding protein (SsuA).

The protein localises to the cell inner membrane. The enzyme catalyses ATP + H2O + aliphatic sulfonate-[sulfonate-binding protein]Side 1 = ADP + phosphate + aliphatic sulfonateSide 2 + [sulfonate-binding protein]Side 1.. Functionally, part of the ABC transporter complex SsuABC involved in aliphatic sulfonates import. Responsible for energy coupling to the transport system. In Pseudomonas fluorescens (strain Pf0-1), this protein is Aliphatic sulfonates import ATP-binding protein SsuB.